The chain runs to 277 residues: NH(3)-dependent NAD(+) synthetase (277 aa).

ATP is bound at residue 46-53 (GISGGQDS). Residue Asp52 participates in Mg(2+) binding. Arg142 lines the deamido-NAD(+) pocket. Position 162 (Thr162) interacts with ATP. Glu167 is a Mg(2+) binding site. Deamido-NAD(+)-binding residues include Lys175 and Asp182. Residues Lys191 and Thr213 each contribute to the ATP site. 263 to 264 (HK) contacts deamido-NAD(+).

It belongs to the NAD synthetase family. As to quaternary structure, homodimer.

The catalysed reaction is deamido-NAD(+) + NH4(+) + ATP = AMP + diphosphate + NAD(+) + H(+). It functions in the pathway cofactor biosynthesis; NAD(+) biosynthesis; NAD(+) from deamido-NAD(+) (ammonia route): step 1/1. In terms of biological role, catalyzes the ATP-dependent amidation of deamido-NAD to form NAD. Uses ammonia as a nitrogen source. This is NH(3)-dependent NAD(+) synthetase from Corynebacterium glutamicum (strain ATCC 13032 / DSM 20300 / JCM 1318 / BCRC 11384 / CCUG 27702 / LMG 3730 / NBRC 12168 / NCIMB 10025 / NRRL B-2784 / 534).